Consider the following 331-residue polypeptide: 6-phosphogluconolactonase (331 aa).

The protein belongs to the cycloisomerase 2 family.

It carries out the reaction 6-phospho-D-glucono-1,5-lactone + H2O = 6-phospho-D-gluconate + H(+). The protein operates within carbohydrate degradation; pentose phosphate pathway; D-ribulose 5-phosphate from D-glucose 6-phosphate (oxidative stage): step 2/3. Functionally, catalyzes the hydrolysis of 6-phosphogluconolactone to 6-phosphogluconate. This chain is 6-phosphogluconolactonase, found in Citrobacter koseri (strain ATCC BAA-895 / CDC 4225-83 / SGSC4696).